Here is a 90-residue protein sequence, read N- to C-terminus: Accessory gland-specific peptide 26Ab (90 aa).

Residues 1 to 21 form the signal peptide; that stretch reads MNYFAVLCIFSCICFWQFSDA.

As to expression, main cells of the accessory glands of males.

Its subcellular location is the secreted. The protein localises to the extracellular space. Functionally, this protein is transferred from male to female during mating and may affect egglaying and behavior after mating. In Drosophila simulans (Fruit fly), this protein is Accessory gland-specific peptide 26Ab (Acp26Ab).